We begin with the raw amino-acid sequence, 370 residues long: Small ribosomal subunit biogenesis GTPase RsgA 1 (370 aa).

Residues 97–255 (QTQLDRPPIA…LADTPGFNQP (159 aa)) enclose the CP-type G domain. GTP-binding positions include 146–149 (NKSD) and 197–205 (GPSGVGKSS). 4 residues coordinate Zn(2+): Cys-280, Cys-285, His-287, and Cys-293. Residues 325-370 (PESTLKLKTKGKGQSQYEPKLESKKYRRTSRRTQVQGLQDLYQEEE) form a disordered region.

It belongs to the TRAFAC class YlqF/YawG GTPase family. RsgA subfamily. As to quaternary structure, monomer. Associates with 30S ribosomal subunit, binds 16S rRNA. It depends on Zn(2+) as a cofactor.

It is found in the cytoplasm. Its function is as follows. One of several proteins that assist in the late maturation steps of the functional core of the 30S ribosomal subunit. Helps release RbfA from mature subunits. May play a role in the assembly of ribosomal proteins into the subunit. Circularly permuted GTPase that catalyzes slow GTP hydrolysis, GTPase activity is stimulated by the 30S ribosomal subunit. This is Small ribosomal subunit biogenesis GTPase RsgA 1 from Nostoc sp. (strain PCC 7120 / SAG 25.82 / UTEX 2576).